Reading from the N-terminus, the 104-residue chain is Inner membrane protein YjcH (104 aa).

Topologically, residues 1–24 are cytoplasmic; the sequence is MNGTIYQRIEDNAHFRELVEKRQR. Residues 25-47 form a helical membrane-spanning segment; that stretch reads FATILSIIMLAVYIGFILLIAFA. Topologically, residues 48–61 are periplasmic; the sequence is PGWLGTPLNPNTSV. A helical membrane pass occupies residues 62–84; the sequence is TRGIPIGVGVIVISFVLTGIYIW. Residues 85-104 lie on the Cytoplasmic side of the membrane; sequence RANGEFDRLNNEVLHEVQAS.

The protein resides in the cell inner membrane. The polypeptide is Inner membrane protein YjcH (yjcH) (Escherichia coli (strain K12)).